The chain runs to 303 residues: Epimerase family protein YfhF (303 aa).

This sequence belongs to the NAD(P)-dependent epimerase/dehydratase family. SDR39U1 subfamily.

The sequence is that of Epimerase family protein YfhF (yfhF) from Bacillus subtilis (strain 168).